Reading from the N-terminus, the 201-residue chain is Protein MJ0810 (201 aa).

In terms of domain architecture, AMMECR1 spans 7–197 (EEGTFAVRYA…EVEPRGEVIE (191 aa)).

This is Protein MJ0810 from Methanocaldococcus jannaschii (strain ATCC 43067 / DSM 2661 / JAL-1 / JCM 10045 / NBRC 100440) (Methanococcus jannaschii).